Consider the following 80-residue polypeptide: Large ribosomal subunit protein bL31B (80 aa).

Belongs to the bacterial ribosomal protein bL31 family. Type B subfamily. As to quaternary structure, part of the 50S ribosomal subunit.

The protein is Large ribosomal subunit protein bL31B of Stenotrophomonas maltophilia (strain K279a).